Reading from the N-terminus, the 596-residue chain is Inactive metallocarboxypeptidase ECM14 (596 aa).

The N-terminal stretch at 1–22 (MHFSVRLSLFLTLASSLPLVSA) is a signal peptide. Positions 23 to 184 (VPQHEDQAYT…QTIYESYPKA (162 aa)) are excised as a propeptide. A disordered region spans residues 182-211 (PKAGSASPSQQGPTTRRFSPSASTSKSKPH). Over residues 187 to 207 (ASPSQQGPTTRRFSPSASTSK) the composition is skewed to polar residues. Positions 220–546 (DYQPLSVLLP…RAMVAMGKFL (327 aa)) constitute a Peptidase M14 domain. Positions 285 and 288 each coordinate Zn(2+). Substrate contacts are provided by residues 285-288 (HARE), arginine 343, and 360-361 (DH). A disulfide bridge connects residues cysteine 354 and cysteine 377. The N-linked (GlcNAc...) asparagine glycan is linked to asparagine 370. Residue histidine 417 participates in Zn(2+) binding. 418–419 (SY) contacts substrate. The tract at residues 557-596 (DGLRASEEPQDYDNDLEDGEDDKDEQGSTVFRAQADDLQS) is disordered. Acidic residues predominate over residues 564–580 (EPQDYDNDLEDGEDDKD). Residues 583–596 (GSTVFRAQADDLQS) show a composition bias toward polar residues.

The protein belongs to the peptidase M14 family. Requires Zn(2+) as cofactor.

Its subcellular location is the vacuole. It is found in the secreted. In terms of biological role, inactive carboxypeptidase that may play a role in cell wall organization and biogenesis. The chain is Inactive metallocarboxypeptidase ECM14 (ECM14) from Arthroderma benhamiae (strain ATCC MYA-4681 / CBS 112371) (Trichophyton mentagrophytes).